Reading from the N-terminus, the 430-residue chain is tRNA-2-methylthio-N(6)-dimethylallyladenosine synthase (430 aa).

Residues 1 to 110 (MKVHIFTYGC…VPDAVLNAKN (110 aa)) enclose the MTTase N-terminal domain. [4Fe-4S] cluster contacts are provided by Cys-10, Cys-46, Cys-75, Cys-146, Cys-150, and Cys-153. Residues 132–363 (RSSNHHAWVT…LNLQKTINKE (232 aa)) form the Radical SAM core domain. The TRAM domain maps to 366-427 (KSYLGKEVEV…AGPLYGEIKK (62 aa)).

This sequence belongs to the methylthiotransferase family. MiaB subfamily. Monomer. [4Fe-4S] cluster is required as a cofactor.

The protein resides in the cytoplasm. The enzyme catalyses N(6)-dimethylallyladenosine(37) in tRNA + (sulfur carrier)-SH + AH2 + 2 S-adenosyl-L-methionine = 2-methylsulfanyl-N(6)-dimethylallyladenosine(37) in tRNA + (sulfur carrier)-H + 5'-deoxyadenosine + L-methionine + A + S-adenosyl-L-homocysteine + 2 H(+). Its function is as follows. Catalyzes the methylthiolation of N6-(dimethylallyl)adenosine (i(6)A), leading to the formation of 2-methylthio-N6-(dimethylallyl)adenosine (ms(2)i(6)A) at position 37 in tRNAs that read codons beginning with uridine. In Fervidobacterium nodosum (strain ATCC 35602 / DSM 5306 / Rt17-B1), this protein is tRNA-2-methylthio-N(6)-dimethylallyladenosine synthase.